We begin with the raw amino-acid sequence, 209 residues long: Uracil phosphoribosyltransferase (209 aa).

5-phospho-alpha-D-ribose 1-diphosphate is bound by residues Arg79, Arg104, and 131–139 (DPMLATGGS). Residues Ile194 and 199–201 (GDA) each bind uracil. Residue Asp200 participates in 5-phospho-alpha-D-ribose 1-diphosphate binding.

The protein belongs to the UPRTase family. Mg(2+) serves as cofactor.

It catalyses the reaction UMP + diphosphate = 5-phospho-alpha-D-ribose 1-diphosphate + uracil. Its pathway is pyrimidine metabolism; UMP biosynthesis via salvage pathway; UMP from uracil: step 1/1. Allosterically activated by GTP. Catalyzes the conversion of uracil and 5-phospho-alpha-D-ribose 1-diphosphate (PRPP) to UMP and diphosphate. This Bacillus pumilus (strain SAFR-032) protein is Uracil phosphoribosyltransferase.